Reading from the N-terminus, the 119-residue chain is MKALSPVRGCYEAVCCLSERSLAIARGRGKGPAAEEPLSLLDDMNHCYSRLRELVPGVPRGTQLSQVEILQRVIDYILDLQVVLAEPAPGPPDGPHLPIQTAELTPELVISNDKRSFCH.

Positions Arg-28 to Leu-80 constitute a bHLH domain.

In terms of assembly, homodimer, and heterodimer with other HLH proteins. Interacts with COPS5 and COPS7A. Interacts with IFI204. Interacts with GATA4 and NKX2-5. Interacts with ANKRD2; both proteins cooperate in myoblast differentiation. Interacts with CLOCK and BMAL1. Expressed abundantly in lung, kidney and adrenal gland, but not in adult brain.

It is found in the nucleus. Transcriptional regulator (lacking a basic DNA binding domain) which negatively regulates the basic helix-loop-helix (bHLH) transcription factors by forming heterodimers and inhibiting their DNA binding and transcriptional activity. Implicated in regulating a variety of cellular processes, including cellular growth, senescence, differentiation, apoptosis, angiogenesis, and neoplastic transformation. Involved in myogenesis by inhibiting skeletal muscle and cardiac myocyte differentiation and promoting muscle precursor cells proliferation. Inhibits the binding of E2A-containing protein complexes to muscle creatine kinase E-box enhancer. Regulates the circadian clock by repressing the transcriptional activator activity of the CLOCK-BMAL1 heterodimer. This is DNA-binding protein inhibitor ID-3 (ID3) from Homo sapiens (Human).